The chain runs to 332 residues: Sesquiterpene synthase MBR_10393 (332 aa).

2 residues coordinate Mg(2+): Asp-91 and Asp-96. The DDXXXD motif motif lies at 91–96 (DDLFVD). Residue Arg-184 coordinates substrate. 3 residues coordinate Mg(2+): Asn-230, Ser-234, and Glu-238.

It belongs to the terpene synthase family. Mg(2+) serves as cofactor.

The catalysed reaction is (2E,6E)-farnesyl diphosphate + H2O = (+)-corvol ether B + diphosphate. It catalyses the reaction (2E,6E)-farnesyl diphosphate + H2O = (+)-corvol ether A + diphosphate. Its function is as follows. Terpene synthase that catalyzes the conversion of (2E,6E)-farnesyl diphosphate (FPP) into sesquiterpenes which are important for fungi-environment interactions. Produces a mixture consisting of 8 sesquiterpenes including corvol ethers A and B, as well as traces of epizonarene, gamma-cadinene, delta-cadinene, alpha-cadinene, alpha-cadinol, and an unidentified sesquiterpene. The major product is corvol ether B. The protein is Sesquiterpene synthase MBR_10393 of Metarhizium brunneum (strain ARSEF 3297).